A 403-amino-acid polypeptide reads, in one-letter code: Phosphoglycerate kinase (403 aa).

Residues 21–23 (DFN), Arg-37, 60–63 (HLGR), Arg-125, and Arg-158 contribute to the substrate site. ATP is bound by residues Lys-209, Glu-332, and 359–362 (GGDS).

Belongs to the phosphoglycerate kinase family. As to quaternary structure, monomer.

The protein localises to the cytoplasm. It carries out the reaction (2R)-3-phosphoglycerate + ATP = (2R)-3-phospho-glyceroyl phosphate + ADP. It participates in carbohydrate degradation; glycolysis; pyruvate from D-glyceraldehyde 3-phosphate: step 2/5. The sequence is that of Phosphoglycerate kinase from Koribacter versatilis (strain Ellin345).